Reading from the N-terminus, the 562-residue chain is MATRARATILLLLAAVLFAAAAAASGEDRRRETSLRRCLQRCEQDRPPYERARCVQECKDQQQQQQERRREHGGHDDDRRDRDRRGEGSSEEEDEGRERGSRRRPYVFGRRSFRQVVRSDQGSVRLLPPFHQASSLLRGIKNYRVAVLEANPRSFVMPTHTDAHCICYVAQGEGVVAIIENGEKWSYAIRQGDVFVAPAGTINYLANTDGRRKLIVTKILHTISVPGQIQFFFAPGGRNPESFLSSFSKGVQRAAFKISEEKLEKLLGKQDKGVIIRASEEQVRELRRHASEGGHGPHWPLPPFGESSRGPFNILEQRPRFANRHGRLYEADARSFHDLAEHDIRVAVVNITAGSMNAPFYNTRSVKVAYVLDGEGEAEIVCPHLSRGGRGGESEERRRERGKGKWREEEEEEEEQQKGQEEEEEEQVGQGYETIRARLSRGTVFVVPSGHPIVVTSSRDSTLQIVCFDVHANNNERMYLAGMNSVLKKLDPQAKELAFAASAREVDELLNAQQESAFLAGPEKSGRRGEESEDEDRRRRRSHRGRGDEAVETLLRMAAAAV.

A signal peptide spans 1 to 23 (MATRARATILLLLAAVLFAAAAA). Positions 63–88 (QQQQERRREHGGHDDDRRDRDRRGEG) are enriched in basic and acidic residues. The segment at 63-103 (QQQQERRREHGGHDDDRRDRDRRGEGSSEEEDEGRERGSRR) is disordered. 2 Cupin type-1 domains span residues 106–264 (YVFG…EKLE) and 312–507 (FNIL…REVD). A glycan (N-linked (GlcNAc...) asparagine) is linked at Asn350. 2 disordered regions span residues 383–430 (PHLS…QVGQ) and 516–550 (SAFLAGPEKSGRRGEESEDEDRRRRRSHRGRGDEA). Over residues 390 to 408 (RGGESEERRRERGKGKWRE) the composition is skewed to basic and acidic residues. A compositionally biased stretch (acidic residues) spans 409–427 (EEEEEEEQQKGQEEEEEEQ).

Belongs to the 7S seed storage protein family.

The protein resides in the secreted. Seed storage protein. This Oryza sativa subsp. japonica (Rice) protein is 63 kDa globulin-like protein.